A 307-amino-acid chain; its full sequence is N-acetylmuramic acid 6-phosphate etherase (307 aa).

In terms of domain architecture, SIS spans 62–225 (IVAAFQKGGR…TTASMIRIGK (164 aa)). Glu90 acts as the Proton donor in catalysis. The active site involves Glu121.

It belongs to the GCKR-like family. MurNAc-6-P etherase subfamily. In terms of assembly, homodimer.

The enzyme catalyses N-acetyl-D-muramate 6-phosphate + H2O = N-acetyl-D-glucosamine 6-phosphate + (R)-lactate. It functions in the pathway amino-sugar metabolism; 1,6-anhydro-N-acetylmuramate degradation. The protein operates within amino-sugar metabolism; N-acetylmuramate degradation. Its pathway is cell wall biogenesis; peptidoglycan recycling. Its function is as follows. Specifically catalyzes the cleavage of the D-lactyl ether substituent of MurNAc 6-phosphate, producing GlcNAc 6-phosphate and D-lactate. Together with AnmK, is also required for the utilization of anhydro-N-acetylmuramic acid (anhMurNAc) either imported from the medium or derived from its own cell wall murein, and thus plays a role in cell wall recycling. The polypeptide is N-acetylmuramic acid 6-phosphate etherase (Rhizobium rhizogenes (strain K84 / ATCC BAA-868) (Agrobacterium radiobacter)).